The chain runs to 332 residues: Delta-aminolevulinic acid dehydratase (332 aa).

The active-site Schiff-base intermediate with substrate is the lysine 202. 2 residues coordinate 5-aminolevulinate: arginine 212 and lysine 225. Lysine 256 acts as the Schiff-base intermediate with substrate in catalysis. 5-aminolevulinate is bound by residues serine 282 and tyrosine 321.

Belongs to the ALAD family. Homohexamer.

The catalysed reaction is 2 5-aminolevulinate = porphobilinogen + 2 H2O + H(+). It participates in porphyrin-containing compound metabolism; protoporphyrin-IX biosynthesis; coproporphyrinogen-III from 5-aminolevulinate: step 1/4. Functionally, catalyzes an early step in the biosynthesis of tetrapyrroles. Binds two molecules of 5-aminolevulinate per subunit, each at a distinct site, and catalyzes their condensation to form porphobilinogen. The protein is Delta-aminolevulinic acid dehydratase (hemB) of Rhodobacter capsulatus (Rhodopseudomonas capsulata).